The chain runs to 660 residues: Bifunctional polymyxin resistance protein ArnA (660 aa).

The formyltransferase ArnAFT stretch occupies residues 1 to 304; that stretch reads MKTVVFAYHD…MLGLVQGSRL (304 aa). 86 to 88 provides a ligand contact to (6R)-10-formyltetrahydrofolate; the sequence is HLI. The active-site Proton donor; for formyltransferase activity is the His-104. Residues Arg-114 and 136-140 each bind (6R)-10-formyltetrahydrofolate; that span reads VKRAD. The tract at residues 314–660 is dehydrogenase ArnADH; that stretch reads RRTRVLILGV…RTVDLTDKPS (347 aa). NAD(+)-binding positions include Asp-347 and 368–369; that span reads DI. UDP-alpha-D-glucuronate contacts are provided by residues Ala-393, Tyr-398, and 432–433; that span reads TS. Residue Glu-434 is the Proton acceptor; for decarboxylase activity of the active site. UDP-alpha-D-glucuronate-binding positions include Arg-460, Asn-492, 526–535, and Tyr-613; that span reads KLIDGGKQKR. Arg-619 serves as the catalytic Proton donor; for decarboxylase activity.

In the N-terminal section; belongs to the Fmt family. UDP-L-Ara4N formyltransferase subfamily. The protein in the C-terminal section; belongs to the NAD(P)-dependent epimerase/dehydratase family. UDP-glucuronic acid decarboxylase subfamily. In terms of assembly, homohexamer, formed by a dimer of trimers.

It carries out the reaction UDP-alpha-D-glucuronate + NAD(+) = UDP-beta-L-threo-pentopyranos-4-ulose + CO2 + NADH. The catalysed reaction is UDP-4-amino-4-deoxy-beta-L-arabinose + (6R)-10-formyltetrahydrofolate = UDP-4-deoxy-4-formamido-beta-L-arabinose + (6S)-5,6,7,8-tetrahydrofolate + H(+). It participates in nucleotide-sugar biosynthesis; UDP-4-deoxy-4-formamido-beta-L-arabinose biosynthesis; UDP-4-deoxy-4-formamido-beta-L-arabinose from UDP-alpha-D-glucuronate: step 1/3. Its pathway is nucleotide-sugar biosynthesis; UDP-4-deoxy-4-formamido-beta-L-arabinose biosynthesis; UDP-4-deoxy-4-formamido-beta-L-arabinose from UDP-alpha-D-glucuronate: step 3/3. It functions in the pathway bacterial outer membrane biogenesis; lipopolysaccharide biosynthesis. Its function is as follows. Bifunctional enzyme that catalyzes the oxidative decarboxylation of UDP-glucuronic acid (UDP-GlcUA) to UDP-4-keto-arabinose (UDP-Ara4O) and the addition of a formyl group to UDP-4-amino-4-deoxy-L-arabinose (UDP-L-Ara4N) to form UDP-L-4-formamido-arabinose (UDP-L-Ara4FN). The modified arabinose is attached to lipid A and is required for resistance to polymyxin and cationic antimicrobial peptides. This chain is Bifunctional polymyxin resistance protein ArnA, found in Shigella flexneri serotype 5b (strain 8401).